A 105-amino-acid polypeptide reads, in one-letter code: Guanidinium exporter (105 aa).

The helical transmembrane segment at M1–K21 threads the bilayer. Residues Y22 to R28 are Cytoplasmic-facing. The helical transmembrane segment at L29 to A49 threads the bilayer. Over M50–T57 the chain is Periplasmic. The chain crosses the membrane as a helical span at residues A58–L78. The Cytoplasmic segment spans residues G79–S81. The helical transmembrane segment at A82–L102 threads the bilayer. Residues S103–H105 lie on the Periplasmic side of the membrane.

The protein belongs to the drug/metabolite transporter (DMT) superfamily. Small multidrug resistance (SMR) (TC 2.A.7.1) family. Gdx/SugE subfamily.

Its subcellular location is the cell inner membrane. Functionally, guanidinium ion exporter. Couples guanidinium export to the proton motive force, exchanging one guanidinium ion for two protons. This chain is Guanidinium exporter, found in Salmonella typhi.